Here is a 444-residue protein sequence, read N- to C-terminus: Glutamate-1-semialdehyde 2,1-aminomutase (444 aa).

Lys-267 carries the N6-(pyridoxal phosphate)lysine modification.

Belongs to the class-III pyridoxal-phosphate-dependent aminotransferase family. HemL subfamily. In terms of assembly, homodimer. The cofactor is pyridoxal 5'-phosphate.

The protein resides in the cytoplasm. It catalyses the reaction (S)-4-amino-5-oxopentanoate = 5-aminolevulinate. Its pathway is porphyrin-containing compound metabolism; protoporphyrin-IX biosynthesis; 5-aminolevulinate from L-glutamyl-tRNA(Glu): step 2/2. The protein is Glutamate-1-semialdehyde 2,1-aminomutase of Xylella fastidiosa (strain M12).